A 204-amino-acid polypeptide reads, in one-letter code: Proteasome subunit beta type-2-A (204 aa).

The residue at position 1 (methionine 1) is an N-acetylmethionine.

It belongs to the peptidase T1B family. Component of the 20S core complex of the 26S proteasome. The 26S proteasome is composed of a core protease (CP), known as the 20S proteasome, capped at one or both ends by the 19S regulatory particle (RP/PA700). The 20S proteasome core is composed of 28 subunits that are arranged in four stacked rings, resulting in a barrel-shaped structure. The two end rings are each formed by seven alpha subunits, and the two central rings are each formed by seven beta subunits. The catalytic chamber with the active sites is on the inside of the barrel.

It localises to the cytoplasm. The protein resides in the nucleus. In terms of biological role, non-catalytic component of the proteasome, a multicatalytic proteinase complex which is characterized by its ability to cleave peptides with Arg, Phe, Tyr, Leu, and Glu adjacent to the leaving group at neutral or slightly basic pH. The proteasome has an ATP-dependent proteolytic activity. In Arabidopsis thaliana (Mouse-ear cress), this protein is Proteasome subunit beta type-2-A (PBD1).